We begin with the raw amino-acid sequence, 424 residues long: Adenylyltransferase and sulfurtransferase UBA4 (424 aa).

ATP contacts are provided by residues Gly76, Asp97, 104 to 108 (TNLHR), Lys121, and 165 to 166 (DS). Residues Cys206 and Cys209 each contribute to the Zn(2+) site. Cys223 (glycyl thioester intermediate; for adenylyltransferase activity) is an active-site residue. Cys283 contributes to the Zn(2+) binding site. The Rhodanese domain occupies 326–422 (RNSDHVLLDV…WYSEVDQNIP (97 aa)). Catalysis depends on Cys382, which acts as the Cysteine persulfide intermediate; for sulfurtransferase activity.

It in the N-terminal section; belongs to the HesA/MoeB/ThiF family. UBA4 subfamily. It depends on Zn(2+) as a cofactor.

The protein resides in the cytoplasm. Its subcellular location is the cytosol. Its pathway is tRNA modification; 5-methoxycarbonylmethyl-2-thiouridine-tRNA biosynthesis. Functionally, plays a central role in 2-thiolation of mcm(5)S(2)U at tRNA wobble positions of cytosolic tRNA(Lys), tRNA(Glu) and tRNA(Gln). Acts by mediating the C-terminal thiocarboxylation of sulfur carrier URM1. Its N-terminus first activates URM1 as acyl-adenylate (-COAMP), then the persulfide sulfur on the catalytic cysteine is transferred to URM1 to form thiocarboxylation (-COSH) of its C-terminus. The reaction probably involves hydrogen sulfide that is generated from the persulfide intermediate and that acts as a nucleophile towards URM1. Subsequently, a transient disulfide bond is formed. Does not use thiosulfate as sulfur donor; NFS1 probably acting as a sulfur donor for thiocarboxylation reactions. Prior mcm(5) tRNA modification by the elongator complex is required for 2-thiolation. May also be involved in protein urmylation. This Meyerozyma guilliermondii (strain ATCC 6260 / CBS 566 / DSM 6381 / JCM 1539 / NBRC 10279 / NRRL Y-324) (Yeast) protein is Adenylyltransferase and sulfurtransferase UBA4.